Here is a 181-residue protein sequence, read N- to C-terminus: Oligoribonuclease (181 aa).

Residues 8-171 (LIWIDLEMTG…QDIQESIAEL (164 aa)) form the Exonuclease domain. Residue Tyr-129 is part of the active site.

It belongs to the oligoribonuclease family.

Its subcellular location is the cytoplasm. 3'-to-5' exoribonuclease specific for small oligoribonucleotides. The polypeptide is Oligoribonuclease (Shewanella putrefaciens (strain CN-32 / ATCC BAA-453)).